The sequence spans 231 residues: Orotate phosphoribosyltransferase (231 aa).

Residues Lys-27, 79–80, Arg-106, Lys-107, Lys-110, His-112, and 133–141 each bind 5-phospho-alpha-D-ribose 1-diphosphate; these read YK and DDVMTAGTA. The orotate site is built by Thr-137 and Arg-166.

It belongs to the purine/pyrimidine phosphoribosyltransferase family. PyrE subfamily. As to quaternary structure, homodimer. Mg(2+) serves as cofactor.

The catalysed reaction is orotidine 5'-phosphate + diphosphate = orotate + 5-phospho-alpha-D-ribose 1-diphosphate. It functions in the pathway pyrimidine metabolism; UMP biosynthesis via de novo pathway; UMP from orotate: step 1/2. In terms of biological role, catalyzes the transfer of a ribosyl phosphate group from 5-phosphoribose 1-diphosphate to orotate, leading to the formation of orotidine monophosphate (OMP). The chain is Orotate phosphoribosyltransferase from Bifidobacterium animalis subsp. lactis (strain AD011).